We begin with the raw amino-acid sequence, 480 residues long: GTPase Obg (480 aa).

The Obg domain maps to 2 to 159 (TRFIDRVVIH…RDLTLELKTV (158 aa)). An OBG-type G domain is found at 160-341 (ADVGLVGFPS…LTFALWDMVA (182 aa)). Residues 166 to 173 (GFPSAGKS), 191 to 195 (FTTLA), 212 to 215 (DVPG), 292 to 295 (NKID), and 322 to 324 (STV) contribute to the GTP site. 2 residues coordinate Mg(2+): S173 and T193. An OCT domain is found at 359–437 (PIPVDETAFS…IGDMTFDWEP (79 aa)). The segment at 441–480 (AGVDVPLTGRGTDVRLEQTDRVGADERKAARKARRQSGDE) is disordered. Residues 452 to 468 (TDVRLEQTDRVGADERK) show a composition bias toward basic and acidic residues. The segment covering 469-480 (AARKARRQSGDE) has biased composition (basic residues).

This sequence belongs to the TRAFAC class OBG-HflX-like GTPase superfamily. OBG GTPase family. In terms of assembly, monomer. Mg(2+) is required as a cofactor.

The protein localises to the cytoplasm. Functionally, an essential GTPase which binds GTP, GDP and possibly (p)ppGpp with moderate affinity, with high nucleotide exchange rates and a fairly low GTP hydrolysis rate. Plays a role in control of the cell cycle, stress response, ribosome biogenesis and in those bacteria that undergo differentiation, in morphogenesis control. The chain is GTPase Obg from Mycolicibacterium vanbaalenii (strain DSM 7251 / JCM 13017 / BCRC 16820 / KCTC 9966 / NRRL B-24157 / PYR-1) (Mycobacterium vanbaalenii).